A 524-amino-acid polypeptide reads, in one-letter code: Probable lipid II flippase MurJ (524 aa).

13 helical membrane-spanning segments follow: residues 44–64 (IFGAGMATDAFFVAFKLPNLL), 103–123 (LLTLALAVVTVAGMLAAPWVI), 146–166 (ITFPYILLISLASLVGAILNT), 172–192 (IPAFAPTFLNISMIGFALFAA), 195–215 (FNPPVLALAWAVTVGGVLQLV), 250–270 (ILGVSVSQISLIINTIFASFL), 284–304 (LMEFPSGVLGVALGTILLPSL), 322–342 (WGLRLCFLLALPSAVALGILA), 367–387 (LIAYSVGLIGLIVVKVLAPGF), 396–416 (PVKIAIVTLIMTQLMNLAFIG), 420–440 (HAGLSLSIGLAACLNASLLYW), 456–476 (WFLMRLIISVLVMAAVLFGVL), and 494–514 (LMAVVIAGIAAYFAALAVLGF).

Belongs to the MurJ/MviN family.

Its subcellular location is the cell inner membrane. Its pathway is cell wall biogenesis; peptidoglycan biosynthesis. Functionally, involved in peptidoglycan biosynthesis. Transports lipid-linked peptidoglycan precursors from the inner to the outer leaflet of the cytoplasmic membrane. In Salmonella typhimurium (strain LT2 / SGSC1412 / ATCC 700720), this protein is Probable lipid II flippase MurJ.